A 438-amino-acid chain; its full sequence is MFSWLIPDIPELFLTISVWFRLQGWEDNTKLGFIIGNTLTTIFYILRLAQDTLLAGVSRKLIRDYELFDLSKSETLLSDPAFSSYHDVLFNKHHSTANASSYNKRVRKVTSTVYWSTYFLLLLSCYTCYRLFNTYKVYRIYYLKDLNLDKHPSLKKIEPDYEVDEKLLKTSLKSKLLSRFIRLLQLQDEVETELPKVTEHYTLNKWDPSKLIISLSTSFSPTIIICLMYTNVTFLTVIPIIIHQGIFYFMIWNRYEERFKDDALLMRENYLQYDTKYVKPLKQIMYQDVMTDTATISDGGFTKFFPVSKSTLFKHHEMSGDVIIERYNKKSREFENVTDIIKPHHHINNTVKILPPTIRKDHKTNRYDHRQQSILKDRKFNIDSNEPQIINALTTAIPSRSFFNNNPSGSNDDNCSGIKVRSSPTRETFFPATPLRKK.

2 consecutive transmembrane segments (helical) span residues 109 to 129 and 219 to 241; these read VTST…YTCY and FSPT…IPII. A compositionally biased stretch (polar residues) spans 405–414; sequence NNPSGSNDDN. The segment at 405 to 438 is disordered; the sequence is NNPSGSNDDNCSGIKVRSSPTRETFFPATPLRKK.

This sequence belongs to the NUR1 family.

Its subcellular location is the nucleus membrane. Member of a perinuclear network that controls recombination at multiple loci to maintain genome stability. Required for rDNA repeat stability. The protein is Nuclear rim protein 1 (NUR1) of Candida glabrata (strain ATCC 2001 / BCRC 20586 / JCM 3761 / NBRC 0622 / NRRL Y-65 / CBS 138) (Yeast).